The sequence spans 204 residues: Holliday junction branch migration complex subunit RuvA (204 aa).

Residues 1–67 (MIAFLSGHLV…ETELVLYGFG (67 aa)) form a domain I region. Residues 68–146 (SPAERDVFVE…HWRQGLENAD (79 aa)) form a domain II region. A flexible linker region spans residues 147 to 156 (RPLAGGPPPA). Residues 156–204 (AIREEVEMALLALGYSLQEIQAALQALPSQPRPTEEWLRDAITYLSRQP) form a domain III region.

This sequence belongs to the RuvA family. As to quaternary structure, homotetramer. Forms an RuvA(8)-RuvB(12)-Holliday junction (HJ) complex. HJ DNA is sandwiched between 2 RuvA tetramers; dsDNA enters through RuvA and exits via RuvB. An RuvB hexamer assembles on each DNA strand where it exits the tetramer. Each RuvB hexamer is contacted by two RuvA subunits (via domain III) on 2 adjacent RuvB subunits; this complex drives branch migration. In the full resolvosome a probable DNA-RuvA(4)-RuvB(12)-RuvC(2) complex forms which resolves the HJ.

It is found in the cytoplasm. Functionally, the RuvA-RuvB-RuvC complex processes Holliday junction (HJ) DNA during genetic recombination and DNA repair, while the RuvA-RuvB complex plays an important role in the rescue of blocked DNA replication forks via replication fork reversal (RFR). RuvA specifically binds to HJ cruciform DNA, conferring on it an open structure. The RuvB hexamer acts as an ATP-dependent pump, pulling dsDNA into and through the RuvAB complex. HJ branch migration allows RuvC to scan DNA until it finds its consensus sequence, where it cleaves and resolves the cruciform DNA. This chain is Holliday junction branch migration complex subunit RuvA, found in Synechococcus sp. (strain JA-3-3Ab) (Cyanobacteria bacterium Yellowstone A-Prime).